The chain runs to 571 residues: Glutamate--tRNA ligase (571 aa).

The short motif at 110–120 is the 'HIGH' region element; sequence PNPNGPGTLGS.

The protein belongs to the class-I aminoacyl-tRNA synthetase family. Glutamate--tRNA ligase type 2 subfamily.

The protein localises to the cytoplasm. The enzyme catalyses tRNA(Glu) + L-glutamate + ATP = L-glutamyl-tRNA(Glu) + AMP + diphosphate. In terms of biological role, catalyzes the attachment of glutamate to tRNA(Glu) in a two-step reaction: glutamate is first activated by ATP to form Glu-AMP and then transferred to the acceptor end of tRNA(Glu). This is Glutamate--tRNA ligase from Methanosarcina acetivorans (strain ATCC 35395 / DSM 2834 / JCM 12185 / C2A).